Here is a 212-residue protein sequence, read N- to C-terminus: 3-isopropylmalate dehydratase small subunit (212 aa).

This sequence belongs to the LeuD family. LeuD type 1 subfamily. Heterodimer of LeuC and LeuD.

The catalysed reaction is (2R,3S)-3-isopropylmalate = (2S)-2-isopropylmalate. It functions in the pathway amino-acid biosynthesis; L-leucine biosynthesis; L-leucine from 3-methyl-2-oxobutanoate: step 2/4. Functionally, catalyzes the isomerization between 2-isopropylmalate and 3-isopropylmalate, via the formation of 2-isopropylmaleate. The sequence is that of 3-isopropylmalate dehydratase small subunit from Nitrosomonas eutropha (strain DSM 101675 / C91 / Nm57).